Reading from the N-terminus, the 510-residue chain is MKKVIIRKTEEIENWRRNINSEINFIPTMGNLHDGHIKLISTAKNDNSNVNLVSIFINPLQFDNKLDLENYPQTIDNDIKISFSNGADAIFIPSYEDIYPPNNKNIKFLKAPKELSSALCGLNRIGHFDGVCTVVYRLLNLIKPKNLYLGEKDWQQLLILKNLVLRKNLNVAIRSIPTQRDFDGIPLSSRNVHLSKNERKLISFFSSELLEAKKIFQQDKKINLNQIIKKLSAKKISVEYLEHLHPHTLQKARPEDNISLLAGAIRCGETRLIDHVFLMKRRPIIAIDGPAGSGKSTVTKLIAKKLNLLYLDTGAMYRALSWLIIKESVDYKIEKKLQNILKDISIFFKSNTNSHQDVYVNNYCVTKEIRSQKISSIVSKISSIKEVRKFLVAEQRKIGESGGLVAEGRDIGTTVFPHAELKIFLTASIDERAKRRKYDKNSKDSQEIDLYTLKELIKKRDFEDSNREISPLIKANDAIEIITDGYTIDEVVDKIIDLYNDRIPKETEIK.

Residues 1–276 are pantoate--beta-alanine ligase; the sequence is MKKVIIRKTE…CGETRLIDHV (276 aa). Residue 29–36 participates in ATP binding; that stretch reads MGNLHDGH. Residue His36 is the Proton donor of the active site. A (R)-pantoate-binding site is contributed by Gln61. Gln61 serves as a coordination point for beta-alanine. 150 to 153 contacts ATP; it reads GEKD. Position 156 (Gln156) interacts with (R)-pantoate. ATP is bound at residue 187-190; the sequence is LSSR. Residues 277–510 form a cytidylate kinase region; sequence FLMKRRPIIA…DRIPKETEIK (234 aa).

The protein in the N-terminal section; belongs to the pantothenate synthetase family. In the C-terminal section; belongs to the cytidylate kinase family. Type 1 subfamily.

Its subcellular location is the cytoplasm. It carries out the reaction (R)-pantoate + beta-alanine + ATP = (R)-pantothenate + AMP + diphosphate + H(+). The catalysed reaction is CMP + ATP = CDP + ADP. It catalyses the reaction dCMP + ATP = dCDP + ADP. The protein operates within cofactor biosynthesis; (R)-pantothenate biosynthesis; (R)-pantothenate from (R)-pantoate and beta-alanine: step 1/1. Its function is as follows. Catalyzes the condensation of pantoate with beta-alanine in an ATP-dependent reaction via a pantoyl-adenylate intermediate. Functionally, catalyzes the transfer of a phosphate group from ATP to either CMP or dCMP to form CDP or dCDP and ADP, respectively. The chain is Bifunctional pantoate ligase/cytidylate kinase from Prochlorococcus marinus (strain MIT 9301).